The chain runs to 238 residues: Probable xyloglucan-specific endo-beta-1,4-glucanase A (238 aa).

The signal sequence occupies residues 1–18 (MKFSLSVALSLAAATAQA). N-linked (GlcNAc...) asparagine glycans are attached at residues N106 and N171.

It belongs to the glycosyl hydrolase 12 (cellulase H) family.

The protein localises to the secreted. The catalysed reaction is xyloglucan + H2O = xyloglucan oligosaccharides.. Catalyzes endohydrolysis of 1,4-beta-D-glucosidic linkages in xyloglucan with retention of the beta-configuration of the glycosyl residues. Specific for xyloglucan and does not hydrolyze other cell wall components. In Neosartorya fischeri (strain ATCC 1020 / DSM 3700 / CBS 544.65 / FGSC A1164 / JCM 1740 / NRRL 181 / WB 181) (Aspergillus fischerianus), this protein is Probable xyloglucan-specific endo-beta-1,4-glucanase A (xgeA).